Consider the following 680-residue polypeptide: Leucine-rich repeat and calponin homology domain-containing protein 4 (680 aa).

Over residues 1-22 (MAAAVAGPLAAGGEEAAASVSL) the composition is skewed to low complexity. The disordered stretch occupies residues 1–35 (MAAAVAGPLAAGGEEAAASVSLPGSPGLPGSRSAE). LRR repeat units follow at residues 41–64 (AVAT…AARS), 67–90 (LSDI…ACQL), 92–113 (SLEG…LGNL), 114–136 (TALT…ICQL), 138–158 (LRVL…ISTL), 159–181 (GSLR…LCSL), 182–204 (RSLR…LGDL), 206–226 (LVRL…FCRL), and 227–250 (RHLQ…CLKG). Residues serine 279, serine 281, serine 304, serine 307, serine 309, and serine 313 each carry the phosphoserine modification. The disordered stretch occupies residues 329 to 528 (SELARDPRGP…PSSPESVLRP (200 aa)). Over residues 330–345 (ELARDPRGPRQPREDG) the composition is skewed to basic and acidic residues. Positions 346-355 (AGDGDLEQID) are enriched in acidic residues. Composition is skewed to basic and acidic residues over residues 357–371 (IDSH…RSAA) and 385–418 (DVEK…ERKQ). Residue serine 432 is modified to Phosphoserine. 2 stretches are compositionally biased toward low complexity: residues 440–453 (AAGA…TQAT) and 510–528 (RSSS…VLRP). Residues serine 511, serine 513, serine 517, serine 521, and serine 586 each carry the phosphoserine modification. Positions 531-644 (FPQEKELISQ…VLEAVILVGG (114 aa)) constitute a Calponin-homology (CH) domain. Residues 655-675 (GLGGFLLFYVVFMLLLYVVYT) form a helical membrane-spanning segment.

In terms of tissue distribution, widely expressed across tissues, with the most abundant expression in spleen, testes, thymus, intestine, and blood. Expressed in macrophages.

It localises to the cell membrane. In terms of biological role, accessory protein that regulates signaling by multiple TLRs, acting as a broad-spanning regulator of the innate immune response. In macrophages, binds LPS and promotes proper docking of LPS in lipid raft membrane. May be required for lipid raft maintenance. The chain is Leucine-rich repeat and calponin homology domain-containing protein 4 (Lrch4) from Mus musculus (Mouse).